The primary structure comprises 314 residues: Very long chain fatty acid elongase 4 (314 aa).

Asn20 is a glycosylation site (N-linked (GlcNAc...) asparagine). Helical transmembrane passes span 42–62 (LMQS…FVWL), 78–98 (VLII…RELF), 127–147 (ALWW…FFIL), 165–185 (MFTL…FFGA), 188–208 (NSFI…GPWI), 217–237 (YLTM…ALSL), and 247–267 (MHWA…NFYI). The segment at 274 to 314 (KKPKTGKTAMNGISANGVSKSEKQLVIENGKKQKNGKAKGD) is disordered. Residues 293–304 (KSEKQLVIENGK) show a composition bias toward basic and acidic residues. A compositionally biased stretch (basic residues) spans 305–314 (KQKNGKAKGD). Residues 310 to 314 (KAKGD) carry the Di-lysine motif motif.

This sequence belongs to the ELO family. ELOVL4 subfamily. In terms of assembly, oligomer. N-glycosylated. As to expression, expressed mainly in retina. Also expressed in skin and thymus.

The protein resides in the endoplasmic reticulum membrane. The enzyme catalyses a very-long-chain acyl-CoA + malonyl-CoA + H(+) = a very-long-chain 3-oxoacyl-CoA + CO2 + CoA. It catalyses the reaction hexacosanoyl-CoA + malonyl-CoA + H(+) = 3-oxooctacosanyol-CoA + CO2 + CoA. The catalysed reaction is octacosanoyl-CoA + malonyl-CoA + H(+) = 3-oxo-triacontanoyl-CoA + CO2 + CoA. It carries out the reaction triacontanoyl-CoA + malonyl-CoA + H(+) = 3-oxo-dotriacontanoyl-CoA + CO2 + CoA. The enzyme catalyses (19Z,22Z,25Z,28Z,31Z)-tetratriacontapentaenoyl-CoA + malonyl-CoA + H(+) = 3-oxo-(21Z,24Z,27Z,30Z,33Z)-hexatriacontapentaenoyl-CoA + CO2 + CoA. It catalyses the reaction (4Z,7Z,10Z,13Z,16Z,19Z)-docosahexaenoyl-CoA + malonyl-CoA + H(+) = 3-oxo-(6Z,9Z,12Z,15Z,18Z,21Z)-tetracosahexaenoyl-CoA + CO2 + CoA. The catalysed reaction is (7Z,10Z,13Z,16Z)-docosatetraenoyl-CoA + malonyl-CoA + H(+) = (9Z,12Z,15Z,18Z)-3-oxotetracosatetraenoyl-CoA + CO2 + CoA. It carries out the reaction (11Z,14Z,17Z,20Z,23Z)-hexacosapentaenoyl-CoA + malonyl-CoA + H(+) = 3-oxo-(13Z,16Z,19Z,22Z,25Z)-octacosapentaenoyl-CoA + CO2 + CoA. The enzyme catalyses (13Z,16Z,19Z,22Z,25Z)-octacosapentaenoyl-CoA + malonyl-CoA + H(+) = 3-oxo-(15Z,18Z,21Z,24Z,27Z)-triacontapentaenoyl-CoA + CO2 + CoA. It catalyses the reaction (15Z,18Z,21Z,24Z,27Z)-triacontapentaenoyl-CoA + malonyl-CoA + H(+) = 3-oxo-(17Z,20Z,23Z,26Z,29Z)-dotriacontapentaenoyl-CoA + CO2 + CoA. The catalysed reaction is (17Z,20Z,23Z,26Z,29Z)-dotriacontapentaenoyl-CoA + malonyl-CoA + H(+) = 3-oxo-(19Z,22Z,25Z,28Z,31Z)-tetratriacontapentaenoyl-CoA + CO2 + CoA. It carries out the reaction (21Z,24Z,27Z,30Z,33Z)-hexatriacontapentaenoyl-CoA + malonyl-CoA + H(+) = 3-oxo-(23Z,26Z,29Z,32Z,35Z)-octatriacontapentaenoyl-CoA + CO2 + CoA. The enzyme catalyses (11Z,14Z,17Z,20Z)-hexacosatetraenoyl-CoA + malonyl-CoA + H(+) = (13Z,16Z,19Z,22Z)-3-oxooctacosatetraenoyl-CoA + CO2 + CoA. It catalyses the reaction (13Z,16Z,19Z,22Z)-octacosatetraenoyl-CoA + malonyl-CoA + H(+) = 3-oxo-(15Z,18Z,21Z,24Z)-triacontatetraenoyl-CoA + CO2 + CoA. The catalysed reaction is (15Z,18Z,21Z,24Z)-triacontatetraenoyl-CoA + malonyl-CoA + H(+) = 3-oxo-(17Z,20Z,23Z,26Z)-dotriacontatetraenoyl-CoA + CO2 + CoA. It carries out the reaction (17Z,20Z,23Z,26Z)-dotriacontatetraenoyl-CoA + malonyl-CoA + H(+) = 3-oxo-(19Z,22Z,25Z,28Z)-tetratriacontatetraenoyl-CoA + CO2 + CoA. The enzyme catalyses (19Z,22Z,25Z,28Z)-tetratriacontatetraenoyl-CoA + malonyl-CoA + H(+) = 3-oxo-(21Z,24Z,27Z,30Z)-hexatriacontatetraenoyl-CoA + CO2 + CoA. It catalyses the reaction (21Z,24Z,27Z,30Z)-hexatriacontatetraenoyl-CoA + malonyl-CoA + H(+) = 3-oxo-(23Z,26Z,29Z,32Z)-octatriacontatetraenoyl-CoA + CO2 + CoA. The catalysed reaction is (6Z,9Z,12Z,15Z,18Z,21Z)-tetracosahexaenoyl-CoA + malonyl-CoA + H(+) = 3-oxo-(8Z,11Z,14Z,17Z,20Z,23Z)-hexacosahexaenoyl-CoA + CO2 + CoA. It carries out the reaction (8Z,11Z,14Z,17Z,20Z,23Z)-hexacosahexaenoyl-CoA + malonyl-CoA + H(+) = 3-oxo-(10Z,13Z,16Z,19Z,22Z,25Z)-octacosahexaenoyl-CoA + CO2 + CoA. The enzyme catalyses (10Z,13Z,16Z,19Z,22Z,25Z)-octacosahexaenoyl-CoA + malonyl-CoA + H(+) = 3-oxo-(12Z,15Z,18Z,21Z,24Z,27Z)-triacontahexaenoyl-CoA + CO2 + CoA. It catalyses the reaction (12Z,15Z,18Z,21Z,24Z,27Z)-triacontahexaenoyl-CoA + malonyl-CoA + H(+) = 3-oxo-(14Z,17Z,20Z,23Z,26Z,29Z)-dotriacontahexaenoyl-CoA + CO2 + CoA. The catalysed reaction is (14Z,17Z,20Z,23Z,26Z,29Z)-dotriacontahexaenoyl-CoA + malonyl-CoA + H(+) = 3-oxo-(16Z,19Z,22Z,25Z,28Z,31Z)-tetratriacontahexaenoyl-CoA + CO2 + CoA. It carries out the reaction (16Z,19Z,22Z,25Z,28Z,31Z)-tetratriacontahexaenoyl-CoA + malonyl-CoA + H(+) = 3-oxo-(18Z,21Z,24Z,27Z,30Z,33Z)-hexatriacontahexaenoyl-CoA + CO2 + CoA. The enzyme catalyses (9Z,12Z,15Z,18Z,21Z)-tetracosapentaenoyl-CoA + malonyl-CoA + H(+) = 3-oxo-(11Z,14Z,17Z,20Z,23Z)-hexacosapentaenoyl-CoA + CO2 + CoA. It functions in the pathway lipid metabolism; fatty acid biosynthesis. In terms of biological role, catalyzes the first and rate-limiting reaction of the four reactions that constitute the long-chain fatty acids elongation cycle. This endoplasmic reticulum-bound enzymatic process allows the addition of 2 carbons to the chain of long- and very long-chain fatty acids (VLCFAs) per cycle. Condensing enzyme that catalyzes the synthesis of very long chain saturated (VLC-SFA) and polyunsaturated (PUFA) fatty acids that are involved in multiple biological processes as precursors of membrane lipids and lipid mediators. May play a critical role in early brain and skin development. In Macaca fascicularis (Crab-eating macaque), this protein is Very long chain fatty acid elongase 4.